A 130-amino-acid polypeptide reads, in one-letter code: MAKRKVTRKKIVRKNIADGIVHIAASFNNTMVTVTDNAGNAIAWSSAGNLGFKGSKKSTPFAAQAAVEDAMNKAMEHGIKNVGIKIQGPGSGRDTAVKAVGSMDGVRVTWLKDVTPLAHNGCRPPKRRRV.

The protein belongs to the universal ribosomal protein uS11 family. In terms of assembly, part of the 30S ribosomal subunit. Interacts with proteins S7 and S18. Binds to IF-3.

In terms of biological role, located on the platform of the 30S subunit, it bridges several disparate RNA helices of the 16S rRNA. Forms part of the Shine-Dalgarno cleft in the 70S ribosome. This chain is Small ribosomal subunit protein uS11, found in Aliarcobacter butzleri (strain RM4018) (Arcobacter butzleri).